We begin with the raw amino-acid sequence, 226 residues long: Cytochrome c-553I (226 aa).

Residues 1 to 22 (MTSKTTASLLAICVACAASAIA) form the signal peptide. The interval 43–68 (AAVSGDAHEQPAAEAPAEEEEETPAV) is disordered. Residues cysteine 125, cysteine 128, histidine 129, and methionine 173 each coordinate heme. The disordered stretch occupies residues 203–226 (RGRPAKREDKSDEFVAQEDSCMSG).

Binds 1 heme group per subunit.

Its subcellular location is the periplasm. The polypeptide is Cytochrome c-553I (cycB) (Paracoccus denitrificans).